A 249-amino-acid chain; its full sequence is NAD-dependent protein deacylase 2 (249 aa).

A Deacetylase sirtuin-type domain is found at 1–240 (MNVADLLASS…PRLVEEVKRR (240 aa)). 18 to 37 (GAGISAESGVPTFRGPGGLW) contacts NAD(+). Residues Tyr62 and Arg65 each contribute to the substrate site. 96 to 99 (QNVD) serves as a coordination point for NAD(+). The active-site Proton acceptor is the His114. Residues Cys122, Cys125, Cys142, and Cys145 each contribute to the Zn(2+) site. NAD(+)-binding positions include 182–184 (GTS), 208–210 (NVE), and Ala226.

The protein belongs to the sirtuin family. Class III subfamily. Zn(2+) serves as cofactor.

It localises to the cytoplasm. It carries out the reaction N(6)-acetyl-L-lysyl-[protein] + NAD(+) + H2O = 2''-O-acetyl-ADP-D-ribose + nicotinamide + L-lysyl-[protein]. The catalysed reaction is N(6)-succinyl-L-lysyl-[protein] + NAD(+) + H2O = 2''-O-succinyl-ADP-D-ribose + nicotinamide + L-lysyl-[protein]. Functionally, NAD-dependent lysine deacetylase and desuccinylase that specifically removes acetyl and succinyl groups on target proteins. Modulates the activities of several proteins which are inactive in their acylated form. Deacetylates the N-terminal lysine residue of Alba, the major archaeal chromatin protein and that, in turn, increases Alba's DNA binding affinity, thereby repressing transcription. This is NAD-dependent protein deacylase 2 from Pyrobaculum aerophilum (strain ATCC 51768 / DSM 7523 / JCM 9630 / CIP 104966 / NBRC 100827 / IM2).